The primary structure comprises 254 residues: Ornithine decarboxylase antizyme (254 aa).

The protein belongs to the ODC antizyme family. Interacts with ODC1 and thereby sterically blocks ODC homodimerization.

Functionally, ornithine decarboxylase (ODC) antizyme protein that negatively regulates ODC activity and intracellular polyamine biosynthesis and uptake in response to increased intracellular polyamine levels. Binds to ODC monomers, inhibiting the assembly of the functional ODC homodimer, and targets the monomers for ubiquitin-independent proteolytic destruction by the 26S proteasome. Required for cellular differentiation in neuronal and myogenic lineages during embryonic development. The sequence is that of Ornithine decarboxylase antizyme (Oda) from Drosophila melanogaster (Fruit fly).